A 171-amino-acid polypeptide reads, in one-letter code: Crossover junction endodeoxyribonuclease RuvC (171 aa).

Active-site residues include Asp-7, Glu-74, and Asp-147. Mg(2+) contacts are provided by Asp-7, Glu-74, and Asp-147.

Belongs to the RuvC family. Homodimer which binds Holliday junction (HJ) DNA. The HJ becomes 2-fold symmetrical on binding to RuvC with unstacked arms; it has a different conformation from HJ DNA in complex with RuvA. In the full resolvosome a probable DNA-RuvA(4)-RuvB(12)-RuvC(2) complex forms which resolves the HJ. The cofactor is Mg(2+).

The protein resides in the cytoplasm. It catalyses the reaction Endonucleolytic cleavage at a junction such as a reciprocal single-stranded crossover between two homologous DNA duplexes (Holliday junction).. Its function is as follows. The RuvA-RuvB-RuvC complex processes Holliday junction (HJ) DNA during genetic recombination and DNA repair. Endonuclease that resolves HJ intermediates. Cleaves cruciform DNA by making single-stranded nicks across the HJ at symmetrical positions within the homologous arms, yielding a 5'-phosphate and a 3'-hydroxyl group; requires a central core of homology in the junction. The consensus cleavage sequence is 5'-(A/T)TT(C/G)-3'. Cleavage occurs on the 3'-side of the TT dinucleotide at the point of strand exchange. HJ branch migration catalyzed by RuvA-RuvB allows RuvC to scan DNA until it finds its consensus sequence, where it cleaves and resolves the cruciform DNA. This chain is Crossover junction endodeoxyribonuclease RuvC, found in Acidobacterium capsulatum (strain ATCC 51196 / DSM 11244 / BCRC 80197 / JCM 7670 / NBRC 15755 / NCIMB 13165 / 161).